We begin with the raw amino-acid sequence, 358 residues long: Peptide chain release factor 1 (358 aa).

Gln-235 is modified (N5-methylglutamine).

It belongs to the prokaryotic/mitochondrial release factor family. Post-translationally, methylated by PrmC. Methylation increases the termination efficiency of RF1.

It localises to the cytoplasm. Functionally, peptide chain release factor 1 directs the termination of translation in response to the peptide chain termination codons UAG and UAA. This is Peptide chain release factor 1 from Nitrosospira multiformis (strain ATCC 25196 / NCIMB 11849 / C 71).